The sequence spans 99 residues: Small ribosomal subunit protein bS20 (99 aa).

It belongs to the bacterial ribosomal protein bS20 family.

Its function is as follows. Binds directly to 16S ribosomal RNA. This Synechococcus sp. (strain CC9311) protein is Small ribosomal subunit protein bS20.